We begin with the raw amino-acid sequence, 438 residues long: Gamma-glutamyl phosphate reductase (438 aa).

Belongs to the gamma-glutamyl phosphate reductase family.

It is found in the cytoplasm. It catalyses the reaction L-glutamate 5-semialdehyde + phosphate + NADP(+) = L-glutamyl 5-phosphate + NADPH + H(+). It functions in the pathway amino-acid biosynthesis; L-proline biosynthesis; L-glutamate 5-semialdehyde from L-glutamate: step 2/2. In terms of biological role, catalyzes the NADPH-dependent reduction of L-glutamate 5-phosphate into L-glutamate 5-semialdehyde and phosphate. The product spontaneously undergoes cyclization to form 1-pyrroline-5-carboxylate. In Prochlorococcus marinus (strain NATL1A), this protein is Gamma-glutamyl phosphate reductase.